The following is a 712-amino-acid chain: Nucleolin (712 aa).

The disordered stretch occupies residues 1–305 (MVKLAKAGKN…KKQKVEGTEP (305 aa)). Residues lysine 9, lysine 15, and lysine 16 each carry the N6-acetyllysine modification. Over residues 24 to 43 (VEEDSEDEEMSEDEEDDSSG) the composition is skewed to acidic residues. Phosphoserine is present on residues serine 28, serine 34, serine 41, and serine 42. A compositionally biased stretch (low complexity) spans 56-107 (AAATSAKKVVVSPTKKVAVATPAKKAAVTPGKKAAATPAKKTVTPAKAVTTP). The stretch at 58 to 65 (ATSAKKVV) is repeat 1. Residues 58–135 (ATSAKKVVVS…GAAIPAKGAK (78 aa)) form an 8 X 8 AA tandem repeats of X-T-P-X-K-K-X-X region. Position 67 is a phosphoserine (serine 67). Phosphothreonine is present on residues threonine 69, threonine 76, threonine 84, and threonine 92. 3 repeat units span residues 75–82 (ATPAKKAA), 83–90 (VTPGKKAA), and 91–98 (ATPAKKTV). Position 96 is an N6-acetyllysine (lysine 96). Threonine 99 bears the Phosphothreonine mark. The 5; truncated repeat unit spans residues 99–104 (TPAKAV). Lysine 102 bears the N6-acetyllysine mark. Repeat unit 6 spans residues 105 to 112 (TTPGKKGA). Phosphothreonine is present on threonine 106. Lysine 109 is subject to N6-acetyllysine. Threonine 113 is modified (phosphothreonine). Lysine 116 is subject to N6-acetyllysine. Repeat copies occupy residues 120-127 (ATPGKKGA) and 128-135 (AIPAKGAK). Residue threonine 121 is modified to Phosphothreonine. Low complexity predominate over residues 122 to 137 (PGKKGAAIPAKGAKNG). Residue lysine 124 is modified to N6-acetyllysine. Phosphoserine occurs at positions 145 and 153. Positions 145–171 (SDEEEEDDSEEDEDDDEDEDEDEDEIE) are enriched in acidic residues. Residues 172–183 (PAAMKAAAAAPA) are compositionally biased toward low complexity. Phosphoserine occurs at positions 184 and 206. Acidic residues predominate over residues 184–211 (SEDEDDEDDEDDEDEDDDEEDDSEEEAM). Position 214 is a phosphothreonine (threonine 214). The span at 234-274 (EDEDEEEDDEDEDDDDDDDDDDEDDEDEDDEEEEEEEEEEP) shows a compositional bias: acidic residues. Over residues 275 to 302 (VKEAPGKRKKEMAKQKAAPEAKKQKVEG) the composition is skewed to basic and acidic residues. Lysine 299 participates in a covalent cross-link: Glycyl lysine isopeptide (Lys-Gly) (interchain with G-Cter in SUMO1); alternate. Lysine 299 is covalently cross-linked (Glycyl lysine isopeptide (Lys-Gly) (interchain with G-Cter in SUMO2); alternate). The residue at position 303 (threonine 303) is a Phosphothreonine. RRM domains follow at residues 309-385 (FNLF…KPKG) and 395-468 (RTLL…YTGE). N6-acetyllysine is present on lysine 320. Lysine 326 is covalently cross-linked (Glycyl lysine isopeptide (Lys-Gly) (interchain with G-Cter in SUMO1); alternate). Residue lysine 326 forms a Glycyl lysine isopeptide (Lys-Gly) (interchain with G-Cter in SUMO2); alternate linkage. Lysine 350 is subject to N6-acetyllysine. Serine 358 bears the Phosphoserine mark. Position 369 is a phosphothreonine (threonine 369). Lysine 372 participates in a covalent cross-link: Glycyl lysine isopeptide (Lys-Gly) (interchain with G-Cter in SUMO2). Lysine 379 participates in a covalent cross-link: Glycyl lysine isopeptide (Lys-Gly) (interchain with G-Cter in SUMO2); alternate. Lysine 379 is modified (N6-acetyllysine; alternate). An N6-acetyllysine mark is found at lysine 400 and lysine 405. Position 407 is a phosphothreonine (threonine 407). 2 positions are modified to N6-acetyllysine: lysine 429 and lysine 446. Phosphoserine is present on residues serine 460 and serine 462. An N6-acetyllysine mark is found at lysine 469 and lysine 479. The RRM 3 domain maps to 488-562 (KTLVLSNLSY…RAIRLELQGP (75 aa)). A Glycyl lysine isopeptide (Lys-Gly) (interchain with G-Cter in SUMO2); alternate cross-link involves residue lysine 515. The residue at position 515 (lysine 515) is an N6-acetyllysine; alternate. Lysine 523 is subject to N6-acetyllysine. Serine 565 is subject to Phosphoserine. Position 574 is an N6-acetyllysine (lysine 574). The region spanning 574–649 (KTLFVKGLSE…NKVTLDWAKP (76 aa)) is the RRM 4 domain. A Glycyl lysine isopeptide (Lys-Gly) (interchain with G-Cter in SUMO2); alternate cross-link involves residue lysine 579. Lysine 579 is subject to N6-acetyllysine; alternate. Serine 582 carries the phosphoserine modification. A Glycyl lysine isopeptide (Lys-Gly) (interchain with G-Cter in SUMO1); alternate cross-link involves residue lysine 591. Lysine 591 participates in a covalent cross-link: Glycyl lysine isopeptide (Lys-Gly) (interchain with G-Cter in SUMO2); alternate. Residues serine 593 and serine 621 each carry the phosphoserine modification. A Glycyl lysine isopeptide (Lys-Gly) (interchain with G-Cter in SUMO2) cross-link involves residue lysine 626. Residues 642 to 712 (VTLDWAKPKG…KPQGKKTKFE (71 aa)) are disordered. Lysine 648 is subject to N6-acetyllysine. The span at 652–698 (EGGFGGRGGGRGGFGGRGGGRGGRGGFGGRGRGGFGGRGGFRGGRGG) shows a compositional bias: gly residues. Arginine 658, arginine 662, arginine 668, arginine 672, arginine 675, arginine 681, arginine 683, arginine 689, and arginine 693 each carry asymmetric dimethylarginine. An Asymmetric dimethylarginine; alternate modification is found at arginine 696. Arginine 696 bears the Omega-N-methylarginine; alternate mark. The segment covering 699-712 (GGDHKPQGKKTKFE) has biased composition (basic and acidic residues).

As to quaternary structure, identified in a IGF2BP1-dependent mRNP granule complex containing untranslated mRNAs. Component of the SWAP complex that consists of NPM1, NCL/nucleolin, PARP1 and SWAP70. Component of a complex which is at least composed of HTATSF1/Tat-SF1, the P-TEFb complex components CDK9 and CCNT1, RNA polymerase II, SUPT5H, and NCL/nucleolin. Interacts with AICDA. Interacts with APTX. Interacts with C1QBP. Interacts with ERBB4. Interacts (via C-terminus) with FMR1 isoform 6 (via N-terminus). Interacts with GZF1; this interaction is important for nucleolar localization of GZF1. Interacts with NSUN2. Interacts with NVL. Interacts (via N-terminus domain) with SETX. Interacts (via RRM1 and C-terminal RRM4/Arg/Gly-rich domains) with TERT; the interaction is important for nucleolar localization of TERT. Interacts with WDR46. Interacts with ZFP36. Interacts with LRRC34. Interacts with RRP1B. Interacts with HNRNPU; this interaction occurs during mitosis. Interacts with RIOK1; RIOK1 recruits NCL to the PRMT5 for symmetrically methylation. Interacts with ZBTB7B. Interacts with MDK; this interaction promotes NCL clustering and lateral movements of this complex into lipid rafts leading to MDK internalization. Interacts with HDGF. Interacts with ALKBH2. Interacts with IGFBP5; this interaction is necessary for IGFBP5 localization to the nucleus. Interacts with DDX24 (when ubiquitinated); this interaction may be important during ribosome biogenesis. Some glutamate residues are glycylated by TTLL8. This modification occurs exclusively on glutamate residues and results in a glycine chain on the gamma-carboxyl group. Post-translationally, symmetrically methylated by PRMT5.

It is found in the nucleus. The protein resides in the nucleolus. The protein localises to the cytoplasm. In terms of biological role, nucleolin is the major nucleolar protein of growing eukaryotic cells. It is found associated with intranucleolar chromatin and pre-ribosomal particles. It induces chromatin decondensation by binding to histone H1. It is thought to play a role in pre-rRNA transcription and ribosome assembly. May play a role in the process of transcriptional elongation. Binds RNA oligonucleotides with 5'-UUAGGG-3' repeats more tightly than the telomeric single-stranded DNA 5'-TTAGGG-3' repeats. The sequence is that of Nucleolin (NCL) from Pongo abelii (Sumatran orangutan).